Reading from the N-terminus, the 444-residue chain is Pineal opsin (444 aa).

Residues 1 to 20 (MDALQESPPSHHSLPSALPS) form a disordered region. Topologically, residues 1–46 (MDALQESPPSHHSLPSALPSATGGNGTVATMHNPFERPLEGIAPWN) are extracellular. Over residues 7–20 (SPPSHHSLPSALPS) the composition is skewed to low complexity. Residue Asn25 is glycosylated (N-linked (GlcNAc...) asparagine). A helical membrane pass occupies residues 47-71 (FTMLAALMGTITALSLGENFAVIVV). The Cytoplasmic portion of the chain corresponds to 72–83 (TARFRQLRQPLN). A helical transmembrane segment spans residues 84–108 (YVLVNLAAADLLVSAIGGSVSFFTN). The Extracellular portion of the chain corresponds to 109 to 123 (IKGYFFLGVHACVLE). Residues Cys120 and Cys197 are joined by a disulfide bond. The helical transmembrane segment at 124 to 143 (GFAVTYFGVVALWSLALLAF) threads the bilayer. At 144–162 (ERYFVICRPLGNFRLQSKH) the chain is on the cytoplasmic side. Residues 163-186 (AVLGLAVVWVFSLACTLPPVLGWS) traverse the membrane as a helical segment. Over 187-210 (SYRPSMIGTTCEPNWYSGELHDHT) the chain is Extracellular. Residues 211 to 238 (FILMFFSTCFIFPLAVIFFSYGKLIQKL) traverse the membrane as a helical segment. Residues 239–260 (KKASETQRGLESTRRAEQQVTR) are Cytoplasmic-facing. Residues 261 to 284 (MVVVMILAFLVCWMPYATFSIVVT) form a helical membrane-spanning segment. Over 285–292 (ACPTIHLD) the chain is Extracellular. The chain crosses the membrane as a helical span at residues 293–317 (PLLAAVPAFFSKTATVYNPVIYIFM). Lys304 carries the N6-(retinylidene)lysine modification. Residues 318 to 444 (NKQFRDCFVQ…SESVSKICPV (127 aa)) are Cytoplasmic-facing. Cys331 carries S-palmitoyl cysteine lipidation. Disordered stretches follow at residues 341-360 (QTAG…QSPG) and 388-420 (EPTM…QQGT). Residues 409-419 (QQQGQQQQQQG) are compositionally biased toward low complexity.

It belongs to the G-protein coupled receptor 1 family. Opsin subfamily. In terms of processing, phosphorylated on some or all of the serine and threonine residues present in the C-terminal region. Pineal gland.

It is found in the membrane. This chain is Pineal opsin, found in Petromyzon marinus (Sea lamprey).